We begin with the raw amino-acid sequence, 63 residues long: MGSFSMWHWLIVLVIVLLLFGRGKIPELMGDVAKGIKSFKKGMTDDDAPDTAKTVDHKADETK.

A helical transmembrane segment spans residues 1 to 21; the sequence is MGSFSMWHWLIVLVIVLLLFG. Positions 42-63 are disordered; that stretch reads GMTDDDAPDTAKTVDHKADETK. A compositionally biased stretch (basic and acidic residues) spans 53–63; that stretch reads KTVDHKADETK.

This sequence belongs to the TatA/E family. The Tat system comprises two distinct complexes: a TatABC complex, containing multiple copies of TatA, TatB and TatC subunits, and a separate TatA complex, containing only TatA subunits. Substrates initially bind to the TatABC complex, which probably triggers association of the separate TatA complex to form the active translocon.

It localises to the cell inner membrane. Functionally, part of the twin-arginine translocation (Tat) system that transports large folded proteins containing a characteristic twin-arginine motif in their signal peptide across membranes. TatA could form the protein-conducting channel of the Tat system. This chain is Sec-independent protein translocase protein TatA, found in Rhizobium etli (strain CIAT 652).